The primary structure comprises 225 residues: Small ribosomal subunit protein uS2 (225 aa).

Over residues 1 to 13 the composition is skewed to basic and acidic residues; sequence MAEAKPALEKEAA. A disordered region spans residues 1-33; that stretch reads MAEAKPALEKEAAVKTGSIPSESEDETASHKEG.

Belongs to the universal ribosomal protein uS2 family.

The sequence is that of Small ribosomal subunit protein uS2 from Methanosarcina acetivorans (strain ATCC 35395 / DSM 2834 / JCM 12185 / C2A).